The sequence spans 466 residues: Putative outer membrane protein NMB0088 (466 aa).

An N-terminal signal peptide occupies residues 1–24 (MTPSALKKTVLLLGTAFAAASVHA).

The protein belongs to the OmpP1/FadL family.

The protein localises to the cell outer membrane. The chain is Putative outer membrane protein NMB0088 from Neisseria meningitidis serogroup B (strain ATCC BAA-335 / MC58).